Consider the following 350-residue polypeptide: 3'-hydroxy-N-methyl-(S)-coclaurine 4'-O-methyltransferase (350 aa).

Residues G196, D219, D239, M240, and K253 each coordinate S-adenosyl-L-methionine. The active-site Proton acceptor is H257.

Belongs to the class I-like SAM-binding methyltransferase superfamily. Cation-independent O-methyltransferase family. COMT subfamily. Homodimer.

The catalysed reaction is (S)-3'-hydroxy-N-methylcoclaurine + S-adenosyl-L-methionine = (S)-reticuline + S-adenosyl-L-homocysteine + H(+). It participates in alkaloid biosynthesis; (S)-reticuline biosynthesis; (S)-reticuline from (S)-norcoclaurine: step 4/4. Catalyzes the transfer of the methyl group to the 4'-hydroxyl group of 3'-hydroxy-N-methylcoclaurine to form reticuline. This is 3'-hydroxy-N-methyl-(S)-coclaurine 4'-O-methyltransferase from Coptis japonica (Japanese goldthread).